We begin with the raw amino-acid sequence, 776 residues long: Transcription activator of gluconeogenesis HCAG_03671 (776 aa).

The interval 1-70 (MTASTQNGSP…NAKDPLRPRR (70 aa)) is disordered. Composition is skewed to polar residues over residues 21–41 (NQES…QSPA) and 50–60 (ENGQKHTSTAA). The zn(2)-C6 fungal-type DNA-binding region spans 77–105 (CFACQRAHLTCGDERPCQRCIKRGLQDAC). Disordered regions lie at residues 140 to 159 (RTNA…KDSR), 179 to 248 (TQAK…PFGA), 286 to 351 (GAGD…NIYN), 556 to 593 (NLNV…GGGG), and 651 to 726 (REAQ…SPKQ). Residues 142 to 155 (NASQQQNGPNSNSN) are compositionally biased toward low complexity. Polar residues predominate over residues 195-217 (MQDTSINPSAFQAPSPTSTPNFD). Positions 218-229 (LSSNPPNRNLSS) are enriched in low complexity. 4 stretches are compositionally biased toward polar residues: residues 230 to 244 (AMTQ…QTQD), 292 to 322 (PSDS…NTQP), 334 to 351 (WNPS…NIYN), and 557 to 576 (LNVN…TPRN). The segment covering 657 to 669 (GPDGKGGGGGGGD) has biased composition (gly residues). Over residues 670 to 714 (VATTAATTSTSTSNGANSSGHANANRNNTNPNNSSPPSSSSAAAA) the composition is skewed to low complexity.

The protein belongs to the ERT1/acuK family.

The protein localises to the nucleus. Its function is as follows. Transcription factor which regulates nonfermentable carbon utilization. Activator of gluconeogenetic genes. The polypeptide is Transcription activator of gluconeogenesis HCAG_03671 (Ajellomyces capsulatus (strain NAm1 / WU24) (Darling's disease fungus)).